Reading from the N-terminus, the 311-residue chain is Ribosomal RNA small subunit methyltransferase H (311 aa).

Residues 33–35 (AGH), D53, F80, D101, and Q108 each bind S-adenosyl-L-methionine.

The protein belongs to the methyltransferase superfamily. RsmH family.

It localises to the cytoplasm. It carries out the reaction cytidine(1402) in 16S rRNA + S-adenosyl-L-methionine = N(4)-methylcytidine(1402) in 16S rRNA + S-adenosyl-L-homocysteine + H(+). Its function is as follows. Specifically methylates the N4 position of cytidine in position 1402 (C1402) of 16S rRNA. The protein is Ribosomal RNA small subunit methyltransferase H of Geobacter sulfurreducens (strain ATCC 51573 / DSM 12127 / PCA).